The primary structure comprises 353 residues: MTKAQDRILVQEHLAHQAEPKPLSASEKADLEARIKVALKEKDAVLVAHYYTDPDIQRLAEETGGCVADSLEMARFGNQHPASTVVVAGVRFMGETAKILNPEKKVLMPTLEATCSLDVGCPADEFSEFCDQHPDRTVVVYANTSAAVKARADWVVTSSCAQAIVEHLDAKGEKILWAPDKHLGGYVQKTTGADVLLWDGSCIVHEEFKYRGLEDLKALYPDAAILVHPESPDAVVQMADVVGSTSQLIHAVQTLPNEEFIVATDNGIFYKMQQLAPNKTLIEAPTAGNGATCRSCAHCPWMAMNGLENLLHVLEHGDQEVHVDDELREDALRPLRRMLDFTANMNLKAAGNA.

Residues His-49 and Ser-70 each contribute to the iminosuccinate site. Cys-115 is a binding site for [4Fe-4S] cluster. Residues Tyr-141–Asn-143 and Ser-158 each bind iminosuccinate. Cys-202 provides a ligand contact to [4Fe-4S] cluster. Residues His-228 to Glu-230 and Thr-245 each bind iminosuccinate. A [4Fe-4S] cluster-binding site is contributed by Cys-299.

This sequence belongs to the quinolinate synthase family. Type 1 subfamily. It depends on [4Fe-4S] cluster as a cofactor.

Its subcellular location is the cytoplasm. It catalyses the reaction iminosuccinate + dihydroxyacetone phosphate = quinolinate + phosphate + 2 H2O + H(+). It participates in cofactor biosynthesis; NAD(+) biosynthesis; quinolinate from iminoaspartate: step 1/1. In terms of biological role, catalyzes the condensation of iminoaspartate with dihydroxyacetone phosphate to form quinolinate. This chain is Quinolinate synthase, found in Marinobacter nauticus (strain ATCC 700491 / DSM 11845 / VT8) (Marinobacter aquaeolei).